Reading from the N-terminus, the 508-residue chain is ATP synthase subunit alpha (508 aa).

169–176 is a binding site for ATP; it reads GDRQTGKT.

This sequence belongs to the ATPase alpha/beta chains family. As to quaternary structure, F-type ATPases have 2 components, CF(1) - the catalytic core - and CF(0) - the membrane proton channel. CF(1) has five subunits: alpha(3), beta(3), gamma(1), delta(1), epsilon(1). CF(0) has three main subunits: a(1), b(2) and c(9-12). The alpha and beta chains form an alternating ring which encloses part of the gamma chain. CF(1) is attached to CF(0) by a central stalk formed by the gamma and epsilon chains, while a peripheral stalk is formed by the delta and b chains.

It is found in the cell inner membrane. The catalysed reaction is ATP + H2O + 4 H(+)(in) = ADP + phosphate + 5 H(+)(out). Its function is as follows. Produces ATP from ADP in the presence of a proton gradient across the membrane. The alpha chain is a regulatory subunit. This Allorhizobium ampelinum (strain ATCC BAA-846 / DSM 112012 / S4) (Agrobacterium vitis (strain S4)) protein is ATP synthase subunit alpha.